Reading from the N-terminus, the 417-residue chain is MIELKNYTLNFGPQHPAAHGVLRLVLELEGETIVRADPHIGLLHRATEKLAETKPYIQSIGYMDRLDYVSMMCNEHAYVMAIEKLLGIEPPLRAKYIRTMFDEVTRILNHLLWLGATALDIGAMTVFLYCFREREDLFDCYEAVSGARMHATYYRPGGVARDLPDTMPQYKPSRWHNEREIEKKNHNRQGSLLDFLWAFTERFPRCVDEYETLLTDNRIWKQRTVDIGIVSPENALQWGFTGPMLRGSGIAWDLRKKQSYAAYDRVDFDIPVGKTGDCYDRYLVRVEELRQSNRIIRQCIEWLRKHPGPVKVDDYKVTPPRRVVMKHDMEALIHHFKLFTEGFCLPRGEVYSSVEAPKGEFGIYMVSDGANKPYRLKIRAPGFAHLSSFDDMVRGHMLADGVAILASQDIVFGEIDR.

This sequence belongs to the complex I 49 kDa subunit family. In terms of assembly, NDH-1 is composed of 14 different subunits. Subunits NuoB, C, D, E, F, and G constitute the peripheral sector of the complex.

It is found in the cell inner membrane. The enzyme catalyses a quinone + NADH + 5 H(+)(in) = a quinol + NAD(+) + 4 H(+)(out). In terms of biological role, NDH-1 shuttles electrons from NADH, via FMN and iron-sulfur (Fe-S) centers, to quinones in the respiratory chain. The immediate electron acceptor for the enzyme in this species is believed to be ubiquinone. Couples the redox reaction to proton translocation (for every two electrons transferred, four hydrogen ions are translocated across the cytoplasmic membrane), and thus conserves the redox energy in a proton gradient. This chain is NADH-quinone oxidoreductase subunit D, found in Legionella pneumophila (strain Corby).